A 159-amino-acid polypeptide reads, in one-letter code: 2-C-methyl-D-erythritol 2,4-cyclodiphosphate synthase (159 aa).

A divalent metal cation is bound by residues Asp-10 and His-12. Residues 10-12 and 37-38 contribute to the 4-CDP-2-C-methyl-D-erythritol 2-phosphate site; these read DVH and HS. His-45 is an a divalent metal cation binding site. 4-CDP-2-C-methyl-D-erythritol 2-phosphate is bound by residues 59–61, 64–68, 103–109, 135–138, Phe-142, and Arg-145; these read DIG, FLDTD, AQAPKML, and TTTE.

The protein belongs to the IspF family. In terms of assembly, homotrimer. Requires a divalent metal cation as cofactor.

The catalysed reaction is 4-CDP-2-C-methyl-D-erythritol 2-phosphate = 2-C-methyl-D-erythritol 2,4-cyclic diphosphate + CMP. It functions in the pathway isoprenoid biosynthesis; isopentenyl diphosphate biosynthesis via DXP pathway; isopentenyl diphosphate from 1-deoxy-D-xylulose 5-phosphate: step 4/6. Its function is as follows. Involved in the biosynthesis of isopentenyl diphosphate (IPP) and dimethylallyl diphosphate (DMAPP), two major building blocks of isoprenoid compounds. Catalyzes the conversion of 4-diphosphocytidyl-2-C-methyl-D-erythritol 2-phosphate (CDP-ME2P) to 2-C-methyl-D-erythritol 2,4-cyclodiphosphate (ME-CPP) with a corresponding release of cytidine 5-monophosphate (CMP). This Francisella tularensis subsp. tularensis (strain FSC 198) protein is 2-C-methyl-D-erythritol 2,4-cyclodiphosphate synthase.